A 251-amino-acid chain; its full sequence is uncharacterized protein (251 aa).

The interval 1–22 is disordered; the sequence is MTQLPELGLRSPNNKSPTGPHP.

This is an uncharacterized protein from Homo sapiens (Human).